The sequence spans 270 residues: Elongation factor Ts (270 aa).

Positions Thr-75–Val-78 are involved in Mg(2+) ion dislocation from EF-Tu.

It belongs to the EF-Ts family.

The protein localises to the cytoplasm. In terms of biological role, associates with the EF-Tu.GDP complex and induces the exchange of GDP to GTP. It remains bound to the aminoacyl-tRNA.EF-Tu.GTP complex up to the GTP hydrolysis stage on the ribosome. This chain is Elongation factor Ts, found in Cutibacterium acnes (strain DSM 16379 / KPA171202) (Propionibacterium acnes).